A 47-amino-acid polypeptide reads, in one-letter code: Photosystem II reaction center protein K (47 aa).

A propeptide spanning residues Met-1–Ala-10 is cleaved from the precursor. A helical transmembrane segment spans residues Leu-26–Phe-46.

The protein belongs to the PsbK family. As to quaternary structure, PSII is composed of 1 copy each of membrane proteins PsbA, PsbB, PsbC, PsbD, PsbE, PsbF, PsbH, PsbI, PsbJ, PsbK, PsbL, PsbM, PsbT, PsbX, PsbY, Psb30/Ycf12, peripheral proteins PsbO, CyanoQ (PsbQ), PsbU, PsbV and a large number of cofactors. It forms dimeric complexes.

Its subcellular location is the cellular thylakoid membrane. Functionally, one of the components of the core complex of photosystem II (PSII). PSII is a light-driven water:plastoquinone oxidoreductase that uses light energy to abstract electrons from H(2)O, generating O(2) and a proton gradient subsequently used for ATP formation. It consists of a core antenna complex that captures photons, and an electron transfer chain that converts photonic excitation into a charge separation. In Prochlorococcus marinus (strain NATL1A), this protein is Photosystem II reaction center protein K.